The following is a 295-amino-acid chain: MAGMKEIRGKIKSVQNTRKITKAMEMVAASKMRRAQERMRAARPYADKVRDIAAHMSSATPEYRHPFMVSNEGAKSTGFILVTTDKGLCGGMNTNVLRATLQKFKELEGQGKTVEATAIGGKGLGFLNRLRAKVVSNVVQLGDTPHLEKLIGAVKVQLDMYSEGKVSAVYLAYTRFVNTMKQEPVIEQLLPLSTEQFEAKDDKDSPTPNTSWDYIYEPDAQTVVDELLVRYVEALVYQAVAENMASEQSARMVAMKAASDNAKTVINELQLSYNKSRQAAITKELSEIVGGAAAV.

This sequence belongs to the ATPase gamma chain family. F-type ATPases have 2 components, CF(1) - the catalytic core - and CF(0) - the membrane proton channel. CF(1) has five subunits: alpha(3), beta(3), gamma(1), delta(1), epsilon(1). CF(0) has three main subunits: a, b and c.

The protein localises to the cell inner membrane. Produces ATP from ADP in the presence of a proton gradient across the membrane. The gamma chain is believed to be important in regulating ATPase activity and the flow of protons through the CF(0) complex. The chain is ATP synthase gamma chain from Paraburkholderia phymatum (strain DSM 17167 / CIP 108236 / LMG 21445 / STM815) (Burkholderia phymatum).